The sequence spans 185 residues: Potassium-transporting ATPase KdpC subunit (185 aa).

A helical transmembrane segment spans residues 8-28; that stretch reads LGLVLIMFVLCGFIFPLTVTA. The interval 113–132 is disordered; it reads GQKLSSDAVTTSGSGLDPDI. Residues 114–126 show a composition bias toward polar residues; sequence QKLSSDAVTTSGS.

The protein belongs to the KdpC family. The system is composed of three essential subunits: KdpA, KdpB and KdpC.

It is found in the cell membrane. Functionally, part of the high-affinity ATP-driven potassium transport (or Kdp) system, which catalyzes the hydrolysis of ATP coupled with the electrogenic transport of potassium into the cytoplasm. This subunit acts as a catalytic chaperone that increases the ATP-binding affinity of the ATP-hydrolyzing subunit KdpB by the formation of a transient KdpB/KdpC/ATP ternary complex. This is Potassium-transporting ATPase KdpC subunit from Staphylococcus haemolyticus (strain JCSC1435).